A 208-amino-acid polypeptide reads, in one-letter code: Ribosomal RNA large subunit methyltransferase E (208 aa).

Residues glycine 62, tryptophan 64, aspartate 82, aspartate 98, and aspartate 123 each coordinate S-adenosyl-L-methionine. Lysine 163 functions as the Proton acceptor in the catalytic mechanism.

The protein belongs to the class I-like SAM-binding methyltransferase superfamily. RNA methyltransferase RlmE family.

It is found in the cytoplasm. The catalysed reaction is uridine(2552) in 23S rRNA + S-adenosyl-L-methionine = 2'-O-methyluridine(2552) in 23S rRNA + S-adenosyl-L-homocysteine + H(+). Specifically methylates the uridine in position 2552 of 23S rRNA at the 2'-O position of the ribose in the fully assembled 50S ribosomal subunit. In Haemophilus ducreyi (strain 35000HP / ATCC 700724), this protein is Ribosomal RNA large subunit methyltransferase E.